Consider the following 314-residue polypeptide: Homoserine O-succinyltransferase (314 aa).

Residue C142 is the Acyl-thioester intermediate of the active site. The substrate site is built by K163 and S192. H235 serves as the catalytic Proton acceptor. E237 is an active-site residue. R249 lines the substrate pocket.

This sequence belongs to the MetA family.

It is found in the cytoplasm. It catalyses the reaction L-homoserine + succinyl-CoA = O-succinyl-L-homoserine + CoA. The protein operates within amino-acid biosynthesis; L-methionine biosynthesis via de novo pathway; O-succinyl-L-homoserine from L-homoserine: step 1/1. In terms of biological role, transfers a succinyl group from succinyl-CoA to L-homoserine, forming succinyl-L-homoserine. This Photobacterium profundum (strain SS9) protein is Homoserine O-succinyltransferase.